Here is a 150-residue protein sequence, read N- to C-terminus: Large ribosomal subunit protein uL11 (150 aa).

Belongs to the universal ribosomal protein uL11 family. In terms of assembly, part of the ribosomal stalk of the 50S ribosomal subunit. Interacts with L10 and the large rRNA to form the base of the stalk. L10 forms an elongated spine to which L12 dimers bind in a sequential fashion forming a multimeric L10(L12)X complex. Post-translationally, one or more lysine residues are methylated.

In terms of biological role, forms part of the ribosomal stalk which helps the ribosome interact with GTP-bound translation factors. The protein is Large ribosomal subunit protein uL11 of Cereibacter sphaeroides (strain KD131 / KCTC 12085) (Rhodobacter sphaeroides).